Here is a 359-residue protein sequence, read N- to C-terminus: Large ribosomal subunit protein bL27m (359 aa).

Residues 1 to 24 constitute a mitochondrion transit peptide; the sequence is MSFWKVATLWQMPLRPSILVQVRT. A disordered region spans residues 29–48; the sequence is AAGSRTSMKDSAGRRLGPKK. The segment covering 35–48 has biased composition (basic and acidic residues); the sequence is SMKDSAGRRLGPKK.

The protein belongs to the bacterial ribosomal protein bL27 family.

It localises to the mitochondrion. Component of the large subunit of mitochondrial ribosome. The chain is Large ribosomal subunit protein bL27m (MRPL2) from Eremothecium gossypii (strain ATCC 10895 / CBS 109.51 / FGSC 9923 / NRRL Y-1056) (Yeast).